The primary structure comprises 368 residues: Peptide chain release factor 2 (368 aa).

An N5-methylglutamine modification is found at Q250.

It belongs to the prokaryotic/mitochondrial release factor family. Post-translationally, methylated by PrmC. Methylation increases the termination efficiency of RF2.

It is found in the cytoplasm. Peptide chain release factor 2 directs the termination of translation in response to the peptide chain termination codons UGA and UAA. The polypeptide is Peptide chain release factor 2 (Chlamydia trachomatis serovar L2b (strain UCH-1/proctitis)).